The sequence spans 298 residues: Acetyl-coenzyme A carboxylase carboxyl transferase subunit beta 1 (298 aa).

In terms of domain architecture, CoA carboxyltransferase N-terminal spans 26–294; sequence MWVKCPSCGD…RAADVQNAPA (269 aa). The Zn(2+) site is built by C30, C33, C49, and C51. The C4-type zinc-finger motif lies at 30–51; that stretch reads CPSCGDLIYTRQFSDNLKVCKC.

This sequence belongs to the AccD/PCCB family. As to quaternary structure, acetyl-CoA carboxylase is a heterohexamer composed of biotin carboxyl carrier protein (AccB), biotin carboxylase (AccC) and two subunits each of ACCase subunit alpha (AccA) and ACCase subunit beta (AccD). The cofactor is Zn(2+).

It localises to the cytoplasm. It catalyses the reaction N(6)-carboxybiotinyl-L-lysyl-[protein] + acetyl-CoA = N(6)-biotinyl-L-lysyl-[protein] + malonyl-CoA. It functions in the pathway lipid metabolism; malonyl-CoA biosynthesis; malonyl-CoA from acetyl-CoA: step 1/1. Component of the acetyl coenzyme A carboxylase (ACC) complex. Biotin carboxylase (BC) catalyzes the carboxylation of biotin on its carrier protein (BCCP) and then the CO(2) group is transferred by the transcarboxylase to acetyl-CoA to form malonyl-CoA. The chain is Acetyl-coenzyme A carboxylase carboxyl transferase subunit beta 1 from Roseiflexus castenholzii (strain DSM 13941 / HLO8).